The sequence spans 193 residues: Glycerol-3-phosphate acyltransferase (193 aa).

5 helical membrane-spanning segments follow: residues 2 to 22 (AFII…AVIV), 51 to 71 (QAAF…VLIA), 78 to 98 (GVSL…PVYF), 112 to 132 (VLLG…VIVV), and 154 to 174 (IIAG…LIIW).

It belongs to the PlsY family. As to quaternary structure, probably interacts with PlsX.

It is found in the cell inner membrane. It carries out the reaction an acyl phosphate + sn-glycerol 3-phosphate = a 1-acyl-sn-glycero-3-phosphate + phosphate. It participates in lipid metabolism; phospholipid metabolism. Functionally, catalyzes the transfer of an acyl group from acyl-phosphate (acyl-PO(4)) to glycerol-3-phosphate (G3P) to form lysophosphatidic acid (LPA). This enzyme utilizes acyl-phosphate as fatty acyl donor, but not acyl-CoA or acyl-ACP. The polypeptide is Glycerol-3-phosphate acyltransferase (Coxiella burnetii (strain CbuK_Q154) (Coxiella burnetii (strain Q154))).